A 386-amino-acid polypeptide reads, in one-letter code: uncharacterized protein (386 aa).

12 consecutive transmembrane segments (helical) span residues 8–28 (VFVI…IAPI), 43–63 (IGLI…PVGV), 79–99 (FFYG…GFLI), 102–122 (IFTG…IAAI), 134–154 (IFNS…GILA), 156–176 (MYGI…AAII), 216–236 (FIIN…LALY), 241–261 (NITI…MALL), 272–292 (LGNI…YLLS), 297–317 (FLTI…SSTA), 342–362 (INIG…ILGI), and 365–385 (MYKF…LRIE).

It belongs to the major facilitator superfamily.

The protein localises to the cell membrane. This is an uncharacterized protein from Methanocaldococcus jannaschii (strain ATCC 43067 / DSM 2661 / JAL-1 / JCM 10045 / NBRC 100440) (Methanococcus jannaschii).